Reading from the N-terminus, the 423-residue chain is Adenylosuccinate synthetase (423 aa).

Residues 12 to 18 (GDEGKGK) and 40 to 42 (GHT) contribute to the GTP site. The active-site Proton acceptor is the aspartate 13. Residues aspartate 13 and glycine 40 each contribute to the Mg(2+) site. IMP-binding positions include 13–16 (DEGK), 38–41 (NAGH), threonine 129, arginine 143, glutamine 221, threonine 236, and arginine 300. Histidine 41 acts as the Proton donor in catalysis. 296–302 (SVTGRKR) contacts substrate. Residues arginine 302, 328 to 330 (KSD), and 408 to 410 (SVG) each bind GTP.

The protein belongs to the adenylosuccinate synthetase family. As to quaternary structure, homodimer. Mg(2+) is required as a cofactor.

It localises to the cytoplasm. It catalyses the reaction IMP + L-aspartate + GTP = N(6)-(1,2-dicarboxyethyl)-AMP + GDP + phosphate + 2 H(+). The protein operates within purine metabolism; AMP biosynthesis via de novo pathway; AMP from IMP: step 1/2. In terms of biological role, plays an important role in the de novo pathway of purine nucleotide biosynthesis. Catalyzes the first committed step in the biosynthesis of AMP from IMP. The protein is Adenylosuccinate synthetase of Bacteroides fragilis (strain ATCC 25285 / DSM 2151 / CCUG 4856 / JCM 11019 / LMG 10263 / NCTC 9343 / Onslow / VPI 2553 / EN-2).